The primary structure comprises 75 residues: Large ribosomal subunit protein bL31 (75 aa).

Belongs to the bacterial ribosomal protein bL31 family. Type A subfamily. Part of the 50S ribosomal subunit.

Binds the 23S rRNA. The sequence is that of Large ribosomal subunit protein bL31 from Bradyrhizobium sp. (strain BTAi1 / ATCC BAA-1182).